A 316-amino-acid chain; its full sequence is FAD:protein FMN transferase (316 aa).

FAD contacts are provided by residues M14, 88 to 90 (AFN), and D146. A149 is a binding site for Mg(2+). 2 residues coordinate FAD: K152 and L231. D257 and T261 together coordinate Mg(2+).

It belongs to the ApbE family. Requires Mg(2+) as cofactor.

Its subcellular location is the cytoplasm. It carries out the reaction L-threonyl-[protein] + FAD = FMN-L-threonyl-[protein] + AMP + H(+). Functionally, flavin transferase that catalyzes the transfer of the FMN moiety of FAD and its covalent binding to the hydroxyl group of a threonine residue in a target flavoprotein. Is responsible for the modification of the fumarate reductase KPK_2907. The protein is FAD:protein FMN transferase of Klebsiella pneumoniae (strain 342).